A 1204-amino-acid chain; its full sequence is TPR repeat-containing protein DDB_G0287999 (1204 aa).

Over residues 32-48 (TTDTTTTTSTSTTTDTD) the composition is skewed to low complexity. A disordered region spans residues 32–55 (TTDTTTTTSTSTTTDTDTNSEKSN). TPR repeat units follow at residues 263–296 (SKGLLLMIEFYIKIGDIDSAFKFFEVNFKDYKDL), 379–412 (NDSNNIIKNSSSKLEFNDDCVSNYKKLVNFDQLY), and 583–617 (IQHFVETALIYLINDNSYQEAVKLYIYFLKEGSVT). The disordered stretch occupies residues 360 to 387 (QPPPQEQQLMDDDSNSNSNNDSNNIIKN). Positions 374 to 387 (NSNSNNDSNNIIKN) are enriched in low complexity. Disordered stretches follow at residues 639 to 660 (NNNNNNNNNNNNNNNNNNNNNN) and 761 to 797 (DDNDNDNNNNNNNNNNNNNDDDDGGGHGGGDVFKTTT). A compositionally biased stretch (low complexity) spans 766-778 (DNNNNNNNNNNNN).

This chain is TPR repeat-containing protein DDB_G0287999, found in Dictyostelium discoideum (Social amoeba).